The primary structure comprises 282 residues: Putative 4-diphosphocytidyl-2-C-methyl-D-erythritol kinase (282 aa).

Residue K9 is part of the active site. An ATP-binding site is contributed by 93-103 (PVSAGLAGGSA). The active site involves D135.

It belongs to the GHMP kinase family. IspE subfamily.

The enzyme catalyses 4-CDP-2-C-methyl-D-erythritol + ATP = 4-CDP-2-C-methyl-D-erythritol 2-phosphate + ADP + H(+). Catalyzes the phosphorylation of the position 2 hydroxy group of 4-diphosphocytidyl-2C-methyl-D-erythritol. This chain is Putative 4-diphosphocytidyl-2-C-methyl-D-erythritol kinase, found in Staphylococcus aureus (strain MRSA252).